The following is a 149-amino-acid chain: Nucleoside diphosphate kinase (149 aa).

6 residues coordinate ATP: K9, F57, R85, T91, R102, and N112. The active-site Pros-phosphohistidine intermediate is H115.

Belongs to the NDK family. Homotetramer. The cofactor is Mg(2+).

It is found in the cytoplasm. The enzyme catalyses a 2'-deoxyribonucleoside 5'-diphosphate + ATP = a 2'-deoxyribonucleoside 5'-triphosphate + ADP. It carries out the reaction a ribonucleoside 5'-diphosphate + ATP = a ribonucleoside 5'-triphosphate + ADP. Its function is as follows. Major role in the synthesis of nucleoside triphosphates other than ATP. The ATP gamma phosphate is transferred to the NDP beta phosphate via a ping-pong mechanism, using a phosphorylated active-site intermediate. The sequence is that of Nucleoside diphosphate kinase from Herpetosiphon aurantiacus (strain ATCC 23779 / DSM 785 / 114-95).